Here is a 187-residue protein sequence, read N- to C-terminus: Protein GrpE (187 aa).

Positions 1-30 are disordered; that stretch reads MEKKETKSESEKTNKQDNKNTKSQKKENLN.

It belongs to the GrpE family. In terms of assembly, homodimer.

It localises to the cytoplasm. Participates actively in the response to hyperosmotic and heat shock by preventing the aggregation of stress-denatured proteins, in association with DnaK and GrpE. It is the nucleotide exchange factor for DnaK and may function as a thermosensor. Unfolded proteins bind initially to DnaJ; upon interaction with the DnaJ-bound protein, DnaK hydrolyzes its bound ATP, resulting in the formation of a stable complex. GrpE releases ADP from DnaK; ATP binding to DnaK triggers the release of the substrate protein, thus completing the reaction cycle. Several rounds of ATP-dependent interactions between DnaJ, DnaK and GrpE are required for fully efficient folding. This chain is Protein GrpE, found in Borreliella burgdorferi (strain ATCC 35210 / DSM 4680 / CIP 102532 / B31) (Borrelia burgdorferi).